The chain runs to 491 residues: Ketol-acid reductoisomerase (NADP(+)) (491 aa).

Residues Ala-15 to Ser-208 form the KARI N-terminal Rossmann domain. Residues Cys-45–Gln-48, Arg-68, Arg-76, Ser-78, and Asp-108–Gln-110 contribute to the NADP(+) site. His-132 is a catalytic residue. Position 158 (Gly-158) interacts with NADP(+). KARI C-terminal knotted domains follow at residues Ser-209–Gln-344 and Phe-345–Met-484. Positions 217, 221, 389, and 393 each coordinate Mg(2+). Ser-414 contacts substrate.

This sequence belongs to the ketol-acid reductoisomerase family. Requires Mg(2+) as cofactor.

It carries out the reaction (2R)-2,3-dihydroxy-3-methylbutanoate + NADP(+) = (2S)-2-acetolactate + NADPH + H(+). The enzyme catalyses (2R,3R)-2,3-dihydroxy-3-methylpentanoate + NADP(+) = (S)-2-ethyl-2-hydroxy-3-oxobutanoate + NADPH + H(+). It functions in the pathway amino-acid biosynthesis; L-isoleucine biosynthesis; L-isoleucine from 2-oxobutanoate: step 2/4. Its pathway is amino-acid biosynthesis; L-valine biosynthesis; L-valine from pyruvate: step 2/4. In terms of biological role, involved in the biosynthesis of branched-chain amino acids (BCAA). Catalyzes an alkyl-migration followed by a ketol-acid reduction of (S)-2-acetolactate (S2AL) to yield (R)-2,3-dihydroxy-isovalerate. In the isomerase reaction, S2AL is rearranged via a Mg-dependent methyl migration to produce 3-hydroxy-3-methyl-2-ketobutyrate (HMKB). In the reductase reaction, this 2-ketoacid undergoes a metal-dependent reduction by NADPH to yield (R)-2,3-dihydroxy-isovalerate. The sequence is that of Ketol-acid reductoisomerase (NADP(+)) from Enterobacter sp. (strain 638).